Consider the following 760-residue polypeptide: Leucine-rich repeat extensin-like protein 3 (760 aa).

Residues methionine 1–alanine 20 form the signal peptide. N-linked (GlcNAc...) asparagine glycosylation occurs at asparagine 16. The stretch at leucine 21–glutamate 45 is one LRR 1 repeat. Asparagine 86 and asparagine 98 each carry an N-linked (GlcNAc...) asparagine glycan. LRR repeat units lie at residues isoleucine 113–leucine 137, serine 138–arginine 160, leucine 161–leucine 185, proline 186–lysine 209, leucine 211–serine 232, valine 234–methionine 255, lysine 256–leucine 279, asparagine 281–methionine 303, and valine 304–leucine 327. Residue asparagine 281 is glycosylated (N-linked (GlcNAc...) asparagine). Asparagine 332 is a glycosylation site (N-linked (GlcNAc...) asparagine). Disordered regions lie at residues glycine 389–proline 502, proline 515–proline 610, and proline 663–glycine 748. 2 stretches are compositionally biased toward pro residues: residues proline 394–proline 415 and leucine 423–proline 502. The contains the Ser-Pro(4) repeats stretch occupies residues serine 409–proline 758. Pro residues predominate over residues proline 663–proline 745.

Interacts with SH3P1. Hydroxylated on proline residues in the S-P-P-P-P repeat. In terms of processing, O-glycosylated on hydroxyprolines. In terms of tissue distribution, expressed in roots, stems, leaves and flowers, mostly in vascular tissues.

It is found in the secreted. Its subcellular location is the cell wall. Its function is as follows. Modulates cell morphogenesis by regulating cell wall formation and assembly, and/or growth polarization. The chain is Leucine-rich repeat extensin-like protein 3 (LRX3) from Arabidopsis thaliana (Mouse-ear cress).